The primary structure comprises 455 residues: Homogentisate 1,2-dioxygenase (455 aa).

His-308 (proton acceptor) is an active-site residue. 2 residues coordinate Fe cation: His-351 and Glu-357. The homogentisate site is built by Tyr-366 and His-387. His-387 lines the Fe cation pocket.

The protein belongs to the homogentisate dioxygenase family. As to quaternary structure, hexamer; dimer of trimers. Fe cation serves as cofactor.

It catalyses the reaction homogentisate + O2 = 4-maleylacetoacetate + H(+). It functions in the pathway amino-acid degradation; L-phenylalanine degradation; acetoacetate and fumarate from L-phenylalanine: step 4/6. In terms of biological role, involved in the catabolism of homogentisate (2,5-dihydroxyphenylacetate or 2,5-OH-PhAc), a central intermediate in the degradation of phenylalanine and tyrosine. Catalyzes the oxidative ring cleavage of the aromatic ring of homogentisate to yield maleylacetoacetate. This Xanthomonas campestris pv. campestris (strain 8004) protein is Homogentisate 1,2-dioxygenase.